Reading from the N-terminus, the 372-residue chain is Oxysterol-binding protein 3 (372 aa).

Residues 1–10 show a composition bias toward basic and acidic residues; the sequence is MGKSDRKLTE. The disordered stretch occupies residues 1 to 25; it reads MGKSDRKLTEENSIENGVKPGKLTE.

It belongs to the OSBP family.

The protein is Oxysterol-binding protein 3 (osbC) of Dictyostelium discoideum (Social amoeba).